The following is a 293-amino-acid chain: Bis(5'-nucleosyl)-tetraphosphatase, symmetrical (293 aa).

It belongs to the Ap4A hydrolase family.

The catalysed reaction is P(1),P(4)-bis(5'-adenosyl) tetraphosphate + H2O = 2 ADP + 2 H(+). Functionally, hydrolyzes diadenosine 5',5'''-P1,P4-tetraphosphate to yield ADP. In Pseudomonas fluorescens (strain Pf0-1), this protein is Bis(5'-nucleosyl)-tetraphosphatase, symmetrical.